The chain runs to 487 residues: L-tartrate/succinate antiporter (487 aa).

A run of 14 helical transmembrane segments spans residues 10-30 (YLAP…AGLE), 33-53 (TWLY…EPVP), 54-74 (GAVV…WLLF), 93-113 (WAVS…FMFG), 137-157 (TLFL…VTPS), 189-209 (IGSY…AIFL), 236-256 (FLGM…LAYV), 292-312 (LMVG…AAMV), 313-333 (GYSV…DIVS), 340-360 (VFFW…TGFI), 370-390 (SLSG…FYLL), 393-413 (FFAS…AAAL), 418-438 (IPLP…SILT), and 465-485 (IFGL…MPVV).

Belongs to the SLC13A/DASS transporter (TC 2.A.47) family. DIT1 subfamily.

The protein resides in the cell inner membrane. The catalysed reaction is (2R,3R)-tartrate(out) + succinate(in) = (2R,3R)-tartrate(in) + succinate(out). Its function is as follows. Catalyzes the uptake of tartrate in exchange for intracellular succinate. Essential for anaerobic L-tartrate fermentation. The sequence is that of L-tartrate/succinate antiporter (ttdT) from Shigella flexneri.